The primary structure comprises 310 residues: Zinc finger CCCH domain-containing protein 14 (310 aa).

Residues 56-75 (ESLSPSPPSSSSPPSRVDTT) are disordered. A coiled-coil region spans residues 84-129 (KLILEYDELNEHYELCLNRLQSLMTELDSLRHENDSLRFENSDLLK). Residues 155 to 167 (QISDSRSAKRNNQ) are compositionally biased toward basic and acidic residues. The interval 155–174 (QISDSRSAKRNNQERNSLPK) is disordered. 2 consecutive C3H1-type zinc fingers follow at residues 232–260 (MMKTELCNKWQETGACCYGDNCQFAHGID) and 270–298 (RYKTEVCRMMVTGAMCPYGHRCHFRHSLT).

Highly expressed in secondary cell wall-forming tissues and the xylem cells of roots. Expressed predominantly in inflorescence stems, flowers and siliques. Highly expressed in the basal portion of stems, where cells are undergoing secondary cell wall thickening.

Functions probably as a transcriptional factor that activates genes involved in secondary cell wall biosynthesis. May play a role in both transcriptional and post-transcriptional regulation. Binds to ssDNA, dsDNA, and ribohomopolymers in vitro. Maybe involved in post-transcriptional regulation of its target genes. Targets RNA of a polygalacturonase, a well-known cell wall modifying gene. Functions redudantly with C3H15 to regulate secondary cell wall formation. C3H14 and C3H15 have overlapping roles in the regulation of secondary cell wall formation and anther development. C3H14 may contribute more to secondary cell wall thickening while C3H15 could be more important in anther development. May regulate at both the transcriptional and post-transcriptional levels the expression of many genes involved in various biological processes, particularly those associated with cell wall metabolism and pollen development. This Arabidopsis thaliana (Mouse-ear cress) protein is Zinc finger CCCH domain-containing protein 14.